Here is a 205-residue protein sequence, read N- to C-terminus: Small ribosomal subunit protein uS5 (205 aa).

Residues 49-112 (LEDEVLDIAM…TKAKMNLVKV (64 aa)) enclose the S5 DRBM domain.

Belongs to the universal ribosomal protein uS5 family. In terms of assembly, part of the 30S ribosomal subunit. Contacts protein S4.

In terms of biological role, with S4 and S12 plays an important role in translational accuracy. This Methanoregula boonei (strain DSM 21154 / JCM 14090 / 6A8) protein is Small ribosomal subunit protein uS5.